Here is a 334-residue protein sequence, read N- to C-terminus: 7,8-didemethyl-8-hydroxy-5-deazariboflavin synthase (334 aa).

The region spanning 2–248 (VSYSKNVFVP…PDVPVQVPPN (247 aa)) is the Radical SAM core domain. C16, C20, and C23 together coordinate [4Fe-4S] cluster.

The protein belongs to the radical SAM superfamily. CofG family. Consists of two subunits, CofG and CofH. Requires [4Fe-4S] cluster as cofactor.

The enzyme catalyses 5-amino-5-(4-hydroxybenzyl)-6-(D-ribitylimino)-5,6-dihydrouracil + S-adenosyl-L-methionine = 7,8-didemethyl-8-hydroxy-5-deazariboflavin + 5'-deoxyadenosine + L-methionine + NH4(+) + H(+). The protein operates within cofactor biosynthesis; coenzyme F0 biosynthesis. Its function is as follows. Catalyzes the radical-mediated synthesis of 7,8-didemethyl-8-hydroxy-5-deazariboflavin from 5-amino-5-(4-hydroxybenzyl)-6-(D-ribitylimino)-5,6-dihydrouracil. In Methanopyrus kandleri (strain AV19 / DSM 6324 / JCM 9639 / NBRC 100938), this protein is 7,8-didemethyl-8-hydroxy-5-deazariboflavin synthase.